Here is a 275-residue protein sequence, read N- to C-terminus: Putative replication protein (275 aa).

Residues 98 to 198 enclose the BRCT domain; that stretch reads SKAICFTPYD…RILKISEDYF (101 aa).

This is Putative replication protein from Wigglesworthia glossinidia brevipalpis.